A 373-amino-acid polypeptide reads, in one-letter code: tRNA-specific 2-thiouridylase MnmA (373 aa).

ATP contacts are provided by residues 7-14 (AMSGGVDS) and L33. The active-site Nucleophile is the C101. C101 and C215 are disulfide-bonded. G125 contributes to the ATP binding site. Positions 165–167 (KDQ) are interaction with tRNA. The active-site Cysteine persulfide intermediate is the C215.

This sequence belongs to the MnmA/TRMU family.

Its subcellular location is the cytoplasm. The enzyme catalyses S-sulfanyl-L-cysteinyl-[protein] + uridine(34) in tRNA + AH2 + ATP = 2-thiouridine(34) in tRNA + L-cysteinyl-[protein] + A + AMP + diphosphate + H(+). Its function is as follows. Catalyzes the 2-thiolation of uridine at the wobble position (U34) of tRNA, leading to the formation of s(2)U34. This Roseiflexus sp. (strain RS-1) protein is tRNA-specific 2-thiouridylase MnmA.